A 227-amino-acid polypeptide reads, in one-letter code: Enolase-phosphatase E1 (227 aa).

Residues D12 and E14 each coordinate Mg(2+). Substrate-binding positions include 118-119 (SS) and K159. A Mg(2+)-binding site is contributed by D186.

The protein belongs to the HAD-like hydrolase superfamily. MasA/MtnC family. Monomer. It depends on Mg(2+) as a cofactor.

Its subcellular location is the cytoplasm. The protein resides in the nucleus. The catalysed reaction is 5-methylsulfanyl-2,3-dioxopentyl phosphate + H2O = 1,2-dihydroxy-5-(methylsulfanyl)pent-1-en-3-one + phosphate. Its pathway is amino-acid biosynthesis; L-methionine biosynthesis via salvage pathway; L-methionine from S-methyl-5-thio-alpha-D-ribose 1-phosphate: step 3/6. It functions in the pathway amino-acid biosynthesis; L-methionine biosynthesis via salvage pathway; L-methionine from S-methyl-5-thio-alpha-D-ribose 1-phosphate: step 4/6. Its function is as follows. Bifunctional enzyme that catalyzes the enolization of 2,3-diketo-5-methylthiopentyl-1-phosphate (DK-MTP-1-P) into the intermediate 2-hydroxy-3-keto-5-methylthiopentenyl-1-phosphate (HK-MTPenyl-1-P), which is then dephosphorylated to form the acireductone 1,2-dihydroxy-3-keto-5-methylthiopentene (DHK-MTPene). This Vanderwaltozyma polyspora (strain ATCC 22028 / DSM 70294 / BCRC 21397 / CBS 2163 / NBRC 10782 / NRRL Y-8283 / UCD 57-17) (Kluyveromyces polysporus) protein is Enolase-phosphatase E1.